The following is a 69-amino-acid chain: Small, acid-soluble spore protein C1 (69 aa).

It belongs to the alpha/beta-type SASP family.

SASP are bound to spore DNA. They are double-stranded DNA-binding proteins that cause DNA to change to an a-like conformation. They protect the DNA backbone from chemical and enzymatic cleavage and are thus involved in dormant spore's high resistance to UV light. The sequence is that of Small, acid-soluble spore protein C1 (SASP-C1) from Priestia megaterium (Bacillus megaterium).